The chain runs to 133 residues: CDGSH iron-sulfur domain protein (133 aa).

At 1–35 the chain is on the lumenal side; it reads MEPISHLVKSSLPNYLSSLPVPDSIGGWFKLSFKD. Residues 36–58 traverse the membrane as a helical segment; sequence WLALIPPTVVVAGLGYTAYLAYC. Residues 59 to 133 lie on the Cytoplasmic side of the membrane; that stretch reads PAARASCAAK…DNVGPIVIKK (75 aa). Cys100, Cys102, Cys111, and His115 together coordinate [2Fe-2S] cluster.

It belongs to the CISD protein family. CISD2 subfamily. It depends on [2Fe-2S] cluster as a cofactor.

It localises to the endoplasmic reticulum membrane. This is CDGSH iron-sulfur domain protein from Drosophila melanogaster (Fruit fly).